The following is a 195-amino-acid chain: Early light-induced protein 1, chloroplastic (195 aa).

Residues 1 to 46 constitute a chloroplast transit peptide; it reads MATASFNMQSVFAGGLTTRKINTNKLFSAGSFPNLKRNYPVGVRCM. The tract at residues 46 to 81 is disordered; the sequence is MAEGGPTNEDSSPAPSTSAAQPLPKSPSPPPPMKPK. Over residues 56-68 the composition is skewed to low complexity; the sequence is SSPAPSTSAAQPL. Pro residues predominate over residues 69 to 79; sequence PKSPSPPPPMK. Transmembrane regions (helical) follow at residues 104–124, 131–151, and 175–195; these read LAMV…ENVL, GVSW…VPLF, and FAML…GTLV.

This sequence belongs to the ELIP/psbS family.

The protein resides in the plastid. It localises to the chloroplast thylakoid membrane. Functionally, prevents excess accumulation of free chlorophyll by inhibiting the entire chlorophyll biosynthesis pathway (e.g. 5-aminolevulinate synthesis and Mg-protoporphyrin IX chelatase activity), and hence prevent photooxidative stress. Probably involved in the integration of pigments into the mature light-harvesting pigment-protein complexes. Light-harvesting chlorophyll (LHC) a/b-binding protein required to ensure a high rate of chlorophyll accumulation during deetiolation in continuous high light. Involved in seed germination. May fulfill a photoprotective functions. This is Early light-induced protein 1, chloroplastic from Arabidopsis thaliana (Mouse-ear cress).